A 384-amino-acid chain; its full sequence is PqqA peptide cyclase (384 aa).

Positions 5-220 constitute a Radical SAM core domain; that stretch reads VGLPLWLLAE…TNEYREKLKA (216 aa). Residues Cys19, Cys23, and Cys26 each contribute to the [4Fe-4S] cluster site.

This sequence belongs to the radical SAM superfamily. PqqE family. In terms of assembly, interacts with PqqD. The interaction is necessary for activity of PqqE. The cofactor is [4Fe-4S] cluster.

It catalyses the reaction [PQQ precursor protein] + S-adenosyl-L-methionine = E-Y cross-linked-[PQQ precursor protein] + 5'-deoxyadenosine + L-methionine + H(+). Its pathway is cofactor biosynthesis; pyrroloquinoline quinone biosynthesis. Its function is as follows. Catalyzes the cross-linking of a glutamate residue and a tyrosine residue in the PqqA protein as part of the biosynthesis of pyrroloquinoline quinone (PQQ). This chain is PqqA peptide cyclase, found in Acinetobacter baumannii (strain SDF).